Consider the following 381-residue polypeptide: cAMP-dependent protein kinase type I-beta regulatory subunit (381 aa).

Positions 1–136 (MASPSCFHSE…ALAKAISKNV (136 aa)) are dimerization and phosphorylation. At Ser3 the chain carries Phosphoserine. Tyr21 bears the 3'-nitrotyrosine mark. Positions 66 to 88 (LARQKSNSQCDSHDEEISPTPPN) are disordered. Ser77 and Ser83 each carry phosphoserine. Thr85 carries the phosphothreonine modification. Residues 96 to 100 (RRGGV) carry the Pseudophosphorylation motif motif. Omega-N-methylarginine is present on Arg97. Residues 137–254 (LFSH…SKVS), Glu202, Arg211, 255–381 (ILES…SLTV), Glu326, and Arg335 contribute to the 3',5'-cyclic AMP site.

This sequence belongs to the cAMP-dependent kinase regulatory chain family. The inactive holoenzyme is composed of two regulatory chains and two catalytic chains. Activation by cAMP releases the two active catalytic monomers and the regulatory dimer. Interacts with PRKX; regulates this cAMP-dependent protein kinase. Interacts with smAKAP; this interaction may target PRKAR1B to the plasma membrane. The pseudophosphorylation site binds to the substrate-binding region of the catalytic chain, resulting in the inhibition of its activity. In terms of tissue distribution, four types of regulatory chains are found: I-alpha, I-beta, II-alpha, and II-beta. Their expression varies among tissues and is in some cases constitutive and in others inducible.

Its subcellular location is the cell membrane. Functionally, regulatory subunit of the cAMP-dependent protein kinases involved in cAMP signaling in cells. This is cAMP-dependent protein kinase type I-beta regulatory subunit (Prkar1b) from Mus musculus (Mouse).